A 572-amino-acid chain; its full sequence is MSTISRQQYADLFGPTTGDKIRLGDTSLFVSIEKDLRTYGDEAVYGGGKTLRDGMGMDNELTSIGGAPDLLITNVTIIDAVLGVIKADVGIKDGRICGIGKAGNPSTMPGVTPSLAVGPATDAISGEHLILTAGGIDAHVHMISPQQAEAALSNGITTLFGGGLGPTDGTNGTTITSGTWNLEMMMRSFDALPINVGLLGKGNSSGMKPIVEQIEAGAAGLKVHEDWGSTVGAIRTSLEAADEYDVQVAIHTDTLNEGGFVENTIAAFDGRTIHTYHTEGAGGGHAPDIIRVASYSNVLPSSTNPTLPFGINSQAELFDMTMVCHNLNPKVATDVAFAESRVRPETIAAENVLHDMGVISIISSDSQAMGRVGESWARSIQTADAMKQGRGKLPEDNADDDNFRVLRYVAKITINPAIAQGISHLVGSVEVGKFADLVLWEPAFFGAKPKFVIKGGMIAWSLMGDPNASLPTPQPVIYRPMYGAFASALHKTCITFASQAGVANGIAERYGLQRLVEPVRNTRAITKNDMVRNAHTPHIEVNPETFAVMVDGVHATVAPIRSVSLGQLYFFS.

The region spanning 134–572 is the Urease domain; sequence GGIDAHVHMI…VSLGQLYFFS (439 aa). Positions 139, 141, and 222 each coordinate Ni(2+). N6-carboxylysine is present on Lys-222. His-224 lines the substrate pocket. Ni(2+)-binding residues include His-251 and His-277. Residue His-325 is the Proton donor of the active site. Ni(2+) is bound at residue Asp-365.

Belongs to the metallo-dependent hydrolases superfamily. Urease alpha subunit family. Heterotrimer of UreA (gamma), UreB (beta) and UreC (alpha) subunits. Three heterotrimers associate to form the active enzyme. Ni cation is required as a cofactor. Post-translationally, carboxylation allows a single lysine to coordinate two nickel ions.

Its subcellular location is the cytoplasm. It catalyses the reaction urea + 2 H2O + H(+) = hydrogencarbonate + 2 NH4(+). It participates in nitrogen metabolism; urea degradation; CO(2) and NH(3) from urea (urease route): step 1/1. This is Urease subunit alpha from Laribacter hongkongensis (strain HLHK9).